The chain runs to 155 residues: Ribosomal RNA large subunit methyltransferase H (155 aa).

S-adenosyl-L-methionine-binding positions include Leu72, Gly104, and 123 to 128; that span reads LSRMTF.

Belongs to the RNA methyltransferase RlmH family. As to quaternary structure, homodimer.

It localises to the cytoplasm. It catalyses the reaction pseudouridine(1915) in 23S rRNA + S-adenosyl-L-methionine = N(3)-methylpseudouridine(1915) in 23S rRNA + S-adenosyl-L-homocysteine + H(+). Its function is as follows. Specifically methylates the pseudouridine at position 1915 (m3Psi1915) in 23S rRNA. This Kosmotoga olearia (strain ATCC BAA-1733 / DSM 21960 / TBF 19.5.1) protein is Ribosomal RNA large subunit methyltransferase H.